Here is a 413-residue protein sequence, read N- to C-terminus: Arginine biosynthesis bifunctional protein ArgJ (413 aa).

Residues Thr-158, Lys-184, Thr-195, Glu-285, Asn-408, and Ser-413 each contribute to the substrate site. Residue Thr-195 is the Nucleophile of the active site.

It belongs to the ArgJ family. As to quaternary structure, heterotetramer of two alpha and two beta chains.

The protein resides in the cytoplasm. It carries out the reaction N(2)-acetyl-L-ornithine + L-glutamate = N-acetyl-L-glutamate + L-ornithine. The enzyme catalyses L-glutamate + acetyl-CoA = N-acetyl-L-glutamate + CoA + H(+). Its pathway is amino-acid biosynthesis; L-arginine biosynthesis; L-ornithine and N-acetyl-L-glutamate from L-glutamate and N(2)-acetyl-L-ornithine (cyclic): step 1/1. The protein operates within amino-acid biosynthesis; L-arginine biosynthesis; N(2)-acetyl-L-ornithine from L-glutamate: step 1/4. Functionally, catalyzes two activities which are involved in the cyclic version of arginine biosynthesis: the synthesis of N-acetylglutamate from glutamate and acetyl-CoA as the acetyl donor, and of ornithine by transacetylation between N(2)-acetylornithine and glutamate. The polypeptide is Arginine biosynthesis bifunctional protein ArgJ (Agrobacterium fabrum (strain C58 / ATCC 33970) (Agrobacterium tumefaciens (strain C58))).